The chain runs to 107 residues: Ribonuclease P protein component 4 (107 aa).

Zn(2+) is bound by residues Cys-66, Cys-69, Cys-92, and Cys-95.

Belongs to the eukaryotic/archaeal RNase P protein component 4 family. Consists of a catalytic RNA component and at least 4-5 protein subunits. Zn(2+) is required as a cofactor.

The protein localises to the cytoplasm. It carries out the reaction Endonucleolytic cleavage of RNA, removing 5'-extranucleotides from tRNA precursor.. Functionally, part of ribonuclease P, a protein complex that generates mature tRNA molecules by cleaving their 5'-ends. The polypeptide is Ribonuclease P protein component 4 (Methanosarcina barkeri (strain Fusaro / DSM 804)).